The chain runs to 345 residues: S-adenosylmethionine:tRNA ribosyltransferase-isomerase (345 aa).

The protein belongs to the QueA family. Monomer.

It localises to the cytoplasm. It carries out the reaction 7-aminomethyl-7-carbaguanosine(34) in tRNA + S-adenosyl-L-methionine = epoxyqueuosine(34) in tRNA + adenine + L-methionine + 2 H(+). Its pathway is tRNA modification; tRNA-queuosine biosynthesis. Transfers and isomerizes the ribose moiety from AdoMet to the 7-aminomethyl group of 7-deazaguanine (preQ1-tRNA) to give epoxyqueuosine (oQ-tRNA). The polypeptide is S-adenosylmethionine:tRNA ribosyltransferase-isomerase (Shewanella sp. (strain W3-18-1)).